The sequence spans 404 residues: Plasma serine protease inhibitor (404 aa).

An N-terminal signal peptide occupies residues 1–19 (MRLCLFLCLVLLGPRMATL). Positions 20 to 24 (RRSQK) are cleaved as a propeptide — removed in mature form. O-linked (GalNAc...) threonine glycosylation is found at Thr35 and Thr36. 3 N-linked (GlcNAc...) asparagine glycosylation sites follow: Asn245, Asn258, and Asn334.

It belongs to the serpin family. Forms protease inhibiting heterodimers in extracellular body fluids with serine proteases such as activated protein C/coagulation factor V/F5, acrosin/ACR, chymotrypsinogen B/CTRB1, prothrombin/F2, factor Xa/F10, factor XI/F11, kallikrein/KLKB1, tissue kallikrein, trypsin/PRSS1, prostate specific antigen/KLK3, tissue plasminogen activator/PLAT and urinary plasminogen activator/PLAU. Forms membrane-anchored serine proteases inhibiting heterodimers with TMPRSS7 and TMPRSS11E. Interacts with SEMG2. In terms of processing, N-glycosylated; glycans consist of a mixture of sialylated bi- (including sialyl-Lewis X epitopes), tri- and tetra-antennary complex-type chains; affects the maximal heparin- and thrombomodulin-enhanced rates of thrombin inhibition. O-glycosylated; further modified with 2 sialic acid residues. Proteolytically cleaved at the N-terminus; inhibits slightly the heparin- and thrombomodulin-enhanced rates of thrombin inhibition. N- and O-glycosylated. Post-translationally, proteolytically cleaved. Inhibition of proteases is accompanied by formation of a stable enzyme-inhibitor complex and by degradation of the serpin to lower molecular weight derivatives. In terms of tissue distribution, expressed strongly in the liver, and moderately in the kidney and testis, but not in other tissues tested.

The protein resides in the secreted. The protein localises to the extracellular space. Its activity is regulated as follows. Its inhibitory activity is greatly enhanced in the presence of glycosaminoglycans, heparin, thrombomodulin and phospholipids vesicles. Its function is as follows. Heparin-dependent serine protease inhibitor acting in body fluids and secretions. Inactivates serine proteases by binding irreversibly to their serine activation site. Involved in the regulation of intravascular and extravascular proteolytic activities. Plays hemostatic roles in the blood plasma. Acts as a procoagulant and pro-inflammatory factor by inhibiting the anticoagulant activated protein C factor as well as the generation of activated protein C factor by the thrombin/thrombomodulin complex. Acts as an anticoagulant factor by inhibiting blood coagulation factors like prothrombin, factor XI, factor Xa, plasma kallikrein and fibrinolytic enzymes such as tissue- and urinary-type plasminogen activators. In seminal plasma, inactivates several serine proteases implicated in the reproductive system. Inhibits the serpin acrosin; indirectly protects component of the male genital tract from being degraded by excessive released acrosin. Inhibits tissue- and urinary-type plasminogen activator, prostate-specific antigen and kallikrein activities; has a control on the sperm motility and fertilization. Inhibits the activated protein C-catalyzed degradation of SEMG1 and SEMG2; regulates the degradation of semenogelin during the process of transfer of spermatozoa from the male reproductive tract into the female tract. In urine, inhibits urinary-type plasminogen activator and kallikrein activities. Inactivates membrane-anchored serine proteases activities such as MPRSS7 and TMPRSS11E. Inhibits urinary-type plasminogen activator-dependent tumor cell invasion and metastasis. May also play a non-inhibitory role in seminal plasma and urine as a hydrophobic hormone carrier by its binding to retinoic acid. This Bos taurus (Bovine) protein is Plasma serine protease inhibitor (SERPINA5).